Here is a 118-residue protein sequence, read N- to C-terminus: NILQFRKMIQCANKGSRAAWHYLDYGCYCGPGGRGTPVDELDRCCKIHDDCYIEAGKDGCYPKLTWYSWQCTGDAPTCNPKSKCKDFVCACDAAAAKCFAKAAYNKANWNIDTKTRCK.

Intrachain disulfides connect cysteine 11–cysteine 71, cysteine 27–cysteine 117, cysteine 29–cysteine 45, cysteine 44–cysteine 98, cysteine 51–cysteine 91, cysteine 60–cysteine 84, and cysteine 78–cysteine 89. Ca(2+)-binding residues include tyrosine 28, glycine 30, and glycine 32. Histidine 48 is a catalytic residue. Aspartate 49 lines the Ca(2+) pocket. Residue aspartate 92 is part of the active site.

This sequence belongs to the phospholipase A2 family. Group I subfamily. D49 sub-subfamily. It depends on Ca(2+) as a cofactor. Expressed by the venom gland.

It is found in the secreted. It carries out the reaction a 1,2-diacyl-sn-glycero-3-phosphocholine + H2O = a 1-acyl-sn-glycero-3-phosphocholine + a fatty acid + H(+). PLA2 catalyzes the calcium-dependent hydrolysis of the 2-acyl groups in 3-sn-phosphoglycerides. This chain is Basic phospholipase A2 PA-15, found in Pseudechis australis (Mulga snake).